The primary structure comprises 862 residues: Pentatricopeptide repeat-containing protein At1g74850, chloroplastic (862 aa).

Residues 1–66 (MNLAIPNPNS…DLVLGNPSVS (66 aa)) constitute a chloroplast transit peptide. PPR repeat units lie at residues 104-139 (SLND…WCKP), 140-174 (NEHI…GVSR), 175-209 (SVFS…KISP), 210-245 (SILT…GIQP), 246-280 (DIVT…GIVP), 281-315 (DLTT…GSLP), 316-350 (DITS…GCTP), 351-385 (NANT…NTDP), 386-420 (DAAT…NIEP), 421-455 (DMET…DIVP), 456-490 (SSKA…GSNP), 491-525 (SIET…GIPR), 526-560 (NRDT…RCDP), 561-595 (DERT…DILP), and 596-630 (SIMC…RVSN). In terms of domain architecture, Smr spans 713–801 (VDVHRMSEGG…RIMCQRSQLK (89 aa)). The tract at residues 831-862 (GTRASTSSDTNHSGNPTQRRTRTKKELAGSTA) is disordered. Residues 833–848 (RASTSSDTNHSGNPTQ) are compositionally biased toward polar residues.

This sequence belongs to the PPR family. P subfamily. As to expression, mostly expressed in leaves, stems and flowers, but barely in roots.

Its subcellular location is the plastid. The protein resides in the chloroplast. Involved in plastid gene expression. The protein is Pentatricopeptide repeat-containing protein At1g74850, chloroplastic (PTAC2) of Arabidopsis thaliana (Mouse-ear cress).